A 496-amino-acid chain; its full sequence is ATP synthase subunit beta 1 (496 aa).

An ATP-binding site is contributed by 167–174; the sequence is GGAGVGKT. Residues 474–496 form a disordered region; sequence REAAAAQQSTAQQAAPAEKEPAA. Residues 476-489 are compositionally biased toward low complexity; it reads AAAAQQSTAQQAAP.

Belongs to the ATPase alpha/beta chains family. As to quaternary structure, F-type ATPases have 2 components, CF(1) - the catalytic core - and CF(0) - the membrane proton channel. CF(1) has five subunits: alpha(3), beta(3), gamma(1), delta(1), epsilon(1). CF(0) has three main subunits: a(1), b(2) and c(9-12). The alpha and beta chains form an alternating ring which encloses part of the gamma chain. CF(1) is attached to CF(0) by a central stalk formed by the gamma and epsilon chains, while a peripheral stalk is formed by the delta and b chains.

The protein localises to the cell inner membrane. It catalyses the reaction ATP + H2O + 4 H(+)(in) = ADP + phosphate + 5 H(+)(out). Functionally, produces ATP from ADP in the presence of a proton gradient across the membrane. The catalytic sites are hosted primarily by the beta subunits. The polypeptide is ATP synthase subunit beta 1 (Paraburkholderia xenovorans (strain LB400)).